A 431-amino-acid chain; its full sequence is MRTVVWQSLSETQQDAILERPAITEGANITAAVAEVIAKVRAEGDAALFELTEKFDRVKPESIRVTEQEIEEASARLTAKMKQALEQAYANIAKFHNAQKPTPIKVETQPGVVCEQVTRPIQKVGLYIPGGSAPLPSTVLMLGVPAQIAGCRKVVLCSPPPIADEILYVAKLCNIDEVYNVGGGQAVAAMAYGTESVTKVDKIFGPGNAYVTEAKRQVSNDFRGAAIDMPAGPSEVLVIADETADADFIAADLLSQAEHGPDSQVVLVTPSVLIADQVTDAVQKQLKQLSRASIAEKALASSLIIIADSLTQAVSISNYYGPEHLIVQTKNPRELLPLLDNAGSIFLGDWSPESAGDYASGTNHVLPTYGYTRTYSSLGLADFSKRMTIQELSAEGLKTLAPTVVTMAEAEGLDAHKRAVTIRVEKLNARG.

NAD(+)-binding residues include Tyr127, Gln185, and Asn208. 3 residues coordinate substrate: Ser234, Gln256, and His259. Zn(2+) contacts are provided by Gln256 and His259. Catalysis depends on proton acceptor residues Glu323 and His324. The substrate site is built by His324, Asp357, Glu411, and His416. Position 357 (Asp357) interacts with Zn(2+). Residue His416 coordinates Zn(2+).

The protein belongs to the histidinol dehydrogenase family. Zn(2+) is required as a cofactor.

The enzyme catalyses L-histidinol + 2 NAD(+) + H2O = L-histidine + 2 NADH + 3 H(+). It participates in amino-acid biosynthesis; L-histidine biosynthesis; L-histidine from 5-phospho-alpha-D-ribose 1-diphosphate: step 9/9. In terms of biological role, catalyzes the sequential NAD-dependent oxidations of L-histidinol to L-histidinaldehyde and then to L-histidine. This chain is Histidinol dehydrogenase, found in Vibrio vulnificus (strain CMCP6).